The primary structure comprises 200 residues: Sorting nexin-10 (200 aa).

A required for interaction with ATP6V1D region spans residues 8–125 (EEFVSVWVRD…SLHLFLQSHL (118 aa)). A PX domain is found at 10 to 127 (FVSVWVRDPR…HLFLQSHLNS (118 aa)). Residues Arg53, Lys79, and Arg94 each contribute to the a 1,2-diacyl-sn-glycero-3-phospho-(1D-myo-inositol-3-phosphate) site. A compositionally biased stretch (basic and acidic residues) spans 156–167 (FPEEEEGKKEND). Residues 156 to 200 (FPEEEEGKKENDIDYDSESSSSGFGHSSDDSSSHGCKMSTAPQES) are disordered.

This sequence belongs to the sorting nexin family. As to quaternary structure, interacts with ATP6V1D; may play a role in ciliogenesis.

Its subcellular location is the cytoplasm. It localises to the endosome membrane. The protein localises to the cytoskeleton. It is found in the microtubule organizing center. The protein resides in the centrosome. Probable phosphoinositide-binding protein involved in protein sorting and membrane trafficking in endosomes. Plays a role in cilium biogenesis through regulation of the transport and the localization of proteins to the cilium. Required for the localization to the cilium of V-ATPase subunit ATP6V1D and ATP6V0D1, and RAB8A. Involved in osteoclast differentiation and therefore bone resorption. The protein is Sorting nexin-10 (SNX10) of Bos taurus (Bovine).